A 247-amino-acid polypeptide reads, in one-letter code: Type III pantothenate kinase (247 aa).

7-14 (AIGNSRWH) lines the ATP pocket. Residues Y91 and 95–98 (GLDR) each bind substrate. D97 functions as the Proton acceptor in the catalytic mechanism. Residue D117 coordinates K(+). An ATP-binding site is contributed by T120.

The protein belongs to the type III pantothenate kinase family. In terms of assembly, homodimer. Requires NH4(+) as cofactor. It depends on K(+) as a cofactor.

Its subcellular location is the cytoplasm. It catalyses the reaction (R)-pantothenate + ATP = (R)-4'-phosphopantothenate + ADP + H(+). Its pathway is cofactor biosynthesis; coenzyme A biosynthesis; CoA from (R)-pantothenate: step 1/5. Functionally, catalyzes the phosphorylation of pantothenate (Pan), the first step in CoA biosynthesis. The protein is Type III pantothenate kinase of Synechococcus sp. (strain ATCC 27144 / PCC 6301 / SAUG 1402/1) (Anacystis nidulans).